We begin with the raw amino-acid sequence, 227 residues long: Cytochrome c oxidase subunit 2 (227 aa).

Residues 1 to 14 (MANHSQLGFQDASS) lie on the Mitochondrial intermembrane side of the membrane. A helical membrane pass occupies residues 15–45 (PIMEELVEFHDHALMVALAICSLVLYLLTLM). Residues 46 to 58 (LTQKLSSNTVDAQ) are Mitochondrial matrix-facing. Residues 59 to 86 (EVELIWTILPAIVLVLLALPSLQILYMM) form a helical membrane-spanning segment. The Mitochondrial intermembrane segment spans residues 87–227 (DEIEEPDLTL…FETWSSLLSS (141 aa)). 6 residues coordinate Cu cation: H160, C195, E197, C199, H203, and M206. E197 contributes to the Mg(2+) binding site.

It belongs to the cytochrome c oxidase subunit 2 family. As to quaternary structure, component of the cytochrome c oxidase (complex IV, CIV), a multisubunit enzyme composed of 14 subunits. The complex is composed of a catalytic core of 3 subunits MT-CO1, MT-CO2 and MT-CO3, encoded in the mitochondrial DNA, and 11 supernumerary subunits COX4I, COX5A, COX5B, COX6A, COX6B, COX6C, COX7A, COX7B, COX7C, COX8 and NDUFA4, which are encoded in the nuclear genome. The complex exists as a monomer or a dimer and forms supercomplexes (SCs) in the inner mitochondrial membrane with NADH-ubiquinone oxidoreductase (complex I, CI) and ubiquinol-cytochrome c oxidoreductase (cytochrome b-c1 complex, complex III, CIII), resulting in different assemblies (supercomplex SCI(1)III(2)IV(1) and megacomplex MCI(2)III(2)IV(2)). Found in a complex with TMEM177, COA6, COX18, COX20, SCO1 and SCO2. Interacts with TMEM177 in a COX20-dependent manner. Interacts with COX20. Interacts with COX16. The cofactor is Cu cation.

It is found in the mitochondrion inner membrane. It catalyses the reaction 4 Fe(II)-[cytochrome c] + O2 + 8 H(+)(in) = 4 Fe(III)-[cytochrome c] + 2 H2O + 4 H(+)(out). Its function is as follows. Component of the cytochrome c oxidase, the last enzyme in the mitochondrial electron transport chain which drives oxidative phosphorylation. The respiratory chain contains 3 multisubunit complexes succinate dehydrogenase (complex II, CII), ubiquinol-cytochrome c oxidoreductase (cytochrome b-c1 complex, complex III, CIII) and cytochrome c oxidase (complex IV, CIV), that cooperate to transfer electrons derived from NADH and succinate to molecular oxygen, creating an electrochemical gradient over the inner membrane that drives transmembrane transport and the ATP synthase. Cytochrome c oxidase is the component of the respiratory chain that catalyzes the reduction of oxygen to water. Electrons originating from reduced cytochrome c in the intermembrane space (IMS) are transferred via the dinuclear copper A center (CU(A)) of subunit 2 and heme A of subunit 1 to the active site in subunit 1, a binuclear center (BNC) formed by heme A3 and copper B (CU(B)). The BNC reduces molecular oxygen to 2 water molecules using 4 electrons from cytochrome c in the IMS and 4 protons from the mitochondrial matrix. This Coturnix japonica (Japanese quail) protein is Cytochrome c oxidase subunit 2 (MT-CO2).